Consider the following 896-residue polypeptide: Vacuolar zinc transporter TgZnT (896 aa).

Residues 1–472 are Cytoplasmic-facing; sequence MPFSCFVFSQ…ETGTQRARRK (472 aa). Over residues 82 to 91 the composition is skewed to basic and acidic residues; the sequence is VLSSRGDESV. 3 disordered regions span residues 82-104, 205-227, and 255-329; these read VLSS…SPGF, MKEI…RPCA, and SSSC…SSAS. Low complexity-rich tracts occupy residues 210–225 and 255–266; these read SPRS…SSRP and SSSCCSRSNSSS. Positions 303–322 are enriched in basic and acidic residues; that stretch reads VHERRAEATCCAPRDRHGGD. A helical membrane pass occupies residues 473 to 493; that stretch reads LVMASMVCCVFMFVEIVAGVL. Residues 494 to 502 lie on the Vacuolar side of the membrane; that stretch reads ANSLALMTD. The helical transmembrane segment at 503-523 threads the bilayer; sequence ASHLLSDLCAFLISLFALWVS. The Cytoplasmic portion of the chain corresponds to 524–539; sequence ELKGNPSMSFGYHRAE. A helical transmembrane segment spans residues 540–560; the sequence is ILGALLSVFLIWVLTAVLIYA. At 561-573 the chain is on the vacuolar side; that stretch reads ACFRLVDPPQVDG. The helical transmembrane segment at 574–594 threads the bilayer; it reads ELMFWTALLGTLANLFMTHIL. At 595–737 the chain is on the cytoplasmic side; sequence KVHSHGIGQV…YENMNLRAAY (143 aa). The interval 621-707 is disordered; the sequence is LQASSSSPEK…RPFSASSAGS (87 aa). Residues 656–680 are compositionally biased toward basic and acidic residues; that stretch reads RDAEAGRDAEAGRDAEAGRDAETGR. A helical membrane pass occupies residues 738 to 758; the sequence is IHALGDLLQNIGVMIASALIW. Topologically, residues 759–762 are vacuolar; that stretch reads WRPD. Residues 763 to 783 traverse the membrane as a helical segment; it reads WAIADPICTFIFSIFVLFTTL. The Cytoplasmic portion of the chain corresponds to 784 to 896; that stretch reads SILKEALNVL…CSDPMKVFRR (113 aa).

This sequence belongs to the cation diffusion facilitator (CDF) transporter (TC 2.A.4) family. SLC30A subfamily.

It is found in the vacuole membrane. The protein localises to the cytoplasmic vesicle membrane. Functionally, vacuolar zinc transporter that is probably involved in the transfer of zinc ions from the cytosol to the vacuole for intracellular storage. Plays an essential role in extracellular zinc tolerance. This Toxoplasma gondii (strain ATCC 50853 / GT1) protein is Vacuolar zinc transporter TgZnT.